Reading from the N-terminus, the 456-residue chain is Smoothelin-like protein 2 (456 aa).

Positions 24–88 (LEGAVRALHE…RQVEALGLAT (65 aa)) form a coiled coil. Thr-96 is modified (phosphothreonine). Residues Ser-98, Ser-126, and Ser-131 each carry the phosphoserine modification. Over residues 120-129 (HATFSLSGRS) the composition is skewed to polar residues. Disordered regions lie at residues 120–140 (HATF…ASDL), 154–190 (GHQL…RMPH), and 220–310 (VGGF…GAQA). Residues 131 to 140 (SVEHDEASDL) show a composition bias toward basic and acidic residues. Residues 163-174 (NGSSEVQTSSAQ) show a composition bias toward polar residues. The segment covering 242–251 (SSSFTRSLSG) has biased composition (low complexity). 3 positions are modified to phosphoserine: Ser-250, Ser-252, and Ser-265. The span at 268-279 (LVTPPQSPPSSQ) shows a compositional bias: pro residues. Residue Thr-270 is modified to Phosphothreonine. Ser-274 carries the post-translational modification Phosphoserine. Residues 298-308 (RSQTLPRTSGA) show a composition bias toward polar residues. Position 339 is a phosphoserine (Ser-339). The region spanning 346 to 453 (SSIKQILLEW…YVQSLYNHLR (108 aa)) is the Calponin-homology (CH) domain.

This sequence belongs to the smoothelin family.

This chain is Smoothelin-like protein 2 (Smtnl2), found in Mus musculus (Mouse).